Consider the following 526-residue polypeptide: MESPEDRNGNDVRQPLLEKIPVKKEAEGEERLCIDEMLQRYCGEFGRWQLKHFVLTCIAWALEAFHTMVMIFADQEPEWRCVGSDCRVGSLNCELDPSSWEWTAGKGSSTVSEWGLICGDKYKVGLVQALFFAGCMIGAGVFGHLSDSKLGRKGSLTVVCIINAIFGIATAFSPNYWTYVVLRFLTGFSTGGVGLTAFVLATEPIGPSKRGVAGMSTFYFFSAGIAVLSGIAYVFRSWRELFIVSSLPSLLFLLIVIPFISESPRWYLVRGKVDEAMKLMHSIAKTNGRHIPAGVTLALDDDVENNNGERNTAVEGSLKDVILSPLMRMRLVISVAISFTVSIVYYGLSLNVGNLKTNLYLNVFVNAVSEMPAFAITAVLLDKYGRKPLSIGTQWFSCVFCLVGFSVWGAGPWKSVRMVSGVLGIFGMAGTYNLLFIYIAELFPTVVRNAALGCATQAAQMGAILAPFVVVLGEELPFGVFAVCGLVGGGLAFYLPETLNKPLYDTMFGMHEAESESNRERGEVIC.

The Cytoplasmic segment spans residues 1–52 (MESPEDRNGNDVRQPLLEKIPVKKEAEGEERLCIDEMLQRYCGEFGRWQLKH). A helical transmembrane segment spans residues 53-73 (FVLTCIAWALEAFHTMVMIFA). Topologically, residues 74-123 (DQEPEWRCVGSDCRVGSLNCELDPSSWEWTAGKGSSTVSEWGLICGDKYK) are extracellular. A helical transmembrane segment spans residues 124–144 (VGLVQALFFAGCMIGAGVFGH). Residues 145 to 153 (LSDSKLGRK) lie on the Cytoplasmic side of the membrane. A helical transmembrane segment spans residues 154–174 (GSLTVVCIINAIFGIATAFSP). The Extracellular portion of the chain corresponds to 175–179 (NYWTY). Residues 180 to 200 (VVLRFLTGFSTGGVGLTAFVL) form a helical membrane-spanning segment. 201–208 (ATEPIGPS) is an ATP binding site. Over 201–214 (ATEPIGPSKRGVAG) the chain is Cytoplasmic. The helical transmembrane segment at 215–235 (MSTFYFFSAGIAVLSGIAYVF) threads the bilayer. Over 236–240 (RSWRE) the chain is Extracellular. A helical transmembrane segment spans residues 241–261 (LFIVSSLPSLLFLLIVIPFIS). Over 262 to 331 (ESPRWYLVRG…ILSPLMRMRL (70 aa)) the chain is Cytoplasmic. The helical transmembrane segment at 332–352 (VISVAISFTVSIVYYGLSLNV) threads the bilayer. At 353 to 360 (GNLKTNLY) the chain is on the extracellular side. The helical transmembrane segment at 361–381 (LNVFVNAVSEMPAFAITAVLL) threads the bilayer. Over 382–390 (DKYGRKPLS) the chain is Cytoplasmic. The helical transmembrane segment at 391 to 411 (IGTQWFSCVFCLVGFSVWGAG) threads the bilayer. The Extracellular portion of the chain corresponds to 412-418 (PWKSVRM). Residues 419 to 439 (VSGVLGIFGMAGTYNLLFIYI) traverse the membrane as a helical segment. Residues 440–451 (AELFPTVVRNAA) are Cytoplasmic-facing. The chain crosses the membrane as a helical span at residues 452–472 (LGCATQAAQMGAILAPFVVVL). Over 473-475 (GEE) the chain is Extracellular. Residues 476-496 (LPFGVFAVCGLVGGGLAFYLP) form a helical membrane-spanning segment. At 497-526 (ETLNKPLYDTMFGMHEAESESNRERGEVIC) the chain is on the cytoplasmic side.

Belongs to the major facilitator (TC 2.A.1) superfamily. Organic cation transporter (TC 2.A.1.19) family. Mostly expressed in siliques, and, to a lower extent, in stems, leaves, flowers and siliques. Present in pollen. In the stems of secondary inflorescences present in the phloem cells and xylem parenchyma cells.

Its subcellular location is the vacuole membrane. High affinity carnitine transporter involved in the active cellular uptake of carnitine. Also transports organic cations. This Arabidopsis thaliana (Mouse-ear cress) protein is Organic cation/carnitine transporter 4 (OCT4).